The primary structure comprises 230 residues: Demethylmenaquinone methyltransferase (230 aa).

S-adenosyl-L-methionine contacts are provided by residues T57, D77, 101–102 (DI), and S118.

Belongs to the class I-like SAM-binding methyltransferase superfamily. MenG/UbiE family.

The enzyme catalyses a 2-demethylmenaquinol + S-adenosyl-L-methionine = a menaquinol + S-adenosyl-L-homocysteine + H(+). It functions in the pathway quinol/quinone metabolism; menaquinone biosynthesis; menaquinol from 1,4-dihydroxy-2-naphthoate: step 2/2. Functionally, methyltransferase required for the conversion of demethylmenaquinol (DMKH2) to menaquinol (MKH2). This is Demethylmenaquinone methyltransferase from Chlamydia felis (strain Fe/C-56) (Chlamydophila felis).